Reading from the N-terminus, the 230-residue chain is Uracil-DNA glycosylase (230 aa).

Asp70 acts as the Proton acceptor in catalysis.

This sequence belongs to the uracil-DNA glycosylase (UDG) superfamily. UNG family.

It localises to the cytoplasm. The catalysed reaction is Hydrolyzes single-stranded DNA or mismatched double-stranded DNA and polynucleotides, releasing free uracil.. Functionally, excises uracil residues from the DNA which can arise as a result of misincorporation of dUMP residues by DNA polymerase or due to deamination of cytosine. In Pseudomonas savastanoi pv. phaseolicola (strain 1448A / Race 6) (Pseudomonas syringae pv. phaseolicola (strain 1448A / Race 6)), this protein is Uracil-DNA glycosylase.